A 568-amino-acid chain; its full sequence is 2-succinyl-5-enolpyruvyl-6-hydroxy-3-cyclohexene-1-carboxylate synthase (568 aa).

It belongs to the TPP enzyme family. MenD subfamily. In terms of assembly, homodimer. It depends on Mg(2+) as a cofactor. Mn(2+) is required as a cofactor. Thiamine diphosphate serves as cofactor.

It catalyses the reaction isochorismate + 2-oxoglutarate + H(+) = 5-enolpyruvoyl-6-hydroxy-2-succinyl-cyclohex-3-ene-1-carboxylate + CO2. It functions in the pathway quinol/quinone metabolism; 1,4-dihydroxy-2-naphthoate biosynthesis; 1,4-dihydroxy-2-naphthoate from chorismate: step 2/7. It participates in quinol/quinone metabolism; menaquinone biosynthesis. In terms of biological role, catalyzes the thiamine diphosphate-dependent decarboxylation of 2-oxoglutarate and the subsequent addition of the resulting succinic semialdehyde-thiamine pyrophosphate anion to isochorismate to yield 2-succinyl-5-enolpyruvyl-6-hydroxy-3-cyclohexene-1-carboxylate (SEPHCHC). The polypeptide is 2-succinyl-5-enolpyruvyl-6-hydroxy-3-cyclohexene-1-carboxylate synthase (Histophilus somni (strain 129Pt) (Haemophilus somnus)).